The chain runs to 110 residues: MELNVGAMTNVELQLARMVEAKKQRRRSHKQNRRERGHKSPSERARSNLRLFRFLPFYQVDGSELTGSCRHVNVAELPESEASRLELSAEDHDFDDTDWFAGNEWAEGAF.

Positions 16–45 are disordered; that stretch reads ARMVEAKKQRRRSHKQNRRERGHKSPSERA. A Nuclear localization signal motif is present at residues 22-27; that stretch reads KKQRRR. Basic residues predominate over residues 23 to 37; it reads KQRRRSHKQNRRERG.

The protein belongs to the cucumovirus/ilarvirus protein 2b family. Homotetramer. Interacts with host AGO1; this interaction blocks AGO1 cleavage activity to attenuate RNA silencing and thus counter host defense. Interacts with host JAZ.

It is found in the host nucleus. Multifunctional protein that plays two independent roles: viral suppressor of host RNAi (VSR) and viral inducer of host attractiveness to insect vectors (VIA). Acts as a suppressor of RNA-mediated gene silencing, also known as post-transcriptional gene silencing (PTGS), a mechanism of plant viral defense that limits the accumulation of viral RNAs. May directly interfere with mobile silencing signaling. Also inhibits signal transduction by the phytohormone jasmonate, making the infected plant more attractive to aphids, which are the second host to play a role as a dissemination vector. Acts by binding to and inhibiting JAZ degradation in the host. The polypeptide is Suppressor of silencing 2b (Cucurbita pepo (Vegetable marrow)).